The chain runs to 420 residues: MLDRNKLRNNLDFFKKKLVERGVSESQFEAYVQADKAMRKLLHQIELANQKQTLLAQQVAKKKGDPKLLKESKELKQKLEQLNIAFKEAETLSQELLLNLPNIADESVPVGRDETANLELLKEGRKPVFDFTPLPHWELCERLQLVAFDKATKLTGARFVAYTDKAAKLLRAIASLMIDLNKNKYQEWNVPVIVNETSLTGTGQLPKFKDDVFKLENTRYYLSPTLEVQLANLHANEIFTEGELPKYYTATGVNFRQEAGSAGKQTKGTIRLHQFQKVELVKFCKPSEAIHELEEMTRDAEQILLELKIPFRRLLLCSGDMGFSAQKTYDLEVWMAGCNEYREVSSCSSCGDFQARRAMIRYKDLTTGKNTYVATLNGTALAIDRIFAAILEHYQTKAGEVMIPQALLKYLDFDKITKPK.

225-227 (TLE) serves as a coordination point for L-serine. 256 to 258 (RQE) is an ATP binding site. Position 279 (Glu279) interacts with L-serine. 343 to 346 (EVSS) provides a ligand contact to ATP. An L-serine-binding site is contributed by Thr379.

It belongs to the class-II aminoacyl-tRNA synthetase family. Type-1 seryl-tRNA synthetase subfamily. Homodimer. The tRNA molecule binds across the dimer.

The protein resides in the cytoplasm. The catalysed reaction is tRNA(Ser) + L-serine + ATP = L-seryl-tRNA(Ser) + AMP + diphosphate + H(+). It catalyses the reaction tRNA(Sec) + L-serine + ATP = L-seryl-tRNA(Sec) + AMP + diphosphate + H(+). Its pathway is aminoacyl-tRNA biosynthesis; selenocysteinyl-tRNA(Sec) biosynthesis; L-seryl-tRNA(Sec) from L-serine and tRNA(Sec): step 1/1. Catalyzes the attachment of serine to tRNA(Ser). Is also able to aminoacylate tRNA(Sec) with serine, to form the misacylated tRNA L-seryl-tRNA(Sec), which will be further converted into selenocysteinyl-tRNA(Sec). The chain is Serine--tRNA ligase from Mycoplasma pneumoniae (strain ATCC 29342 / M129 / Subtype 1) (Mycoplasmoides pneumoniae).